The following is a 399-amino-acid chain: MTSRFGHSQHPRRGRSARARAGRREGVQSNFPATQVLERSAHSLPARQRTALVMAGGTGGHIFPGLALAEALRERGWQVHWLGTPGSMEERLVPPRGFAFEPIDFSGVRGKGLKTLLALPLRLARACLQARAVVRRLQPDVVIGLGGYVTFPGGIAARLARKPLLLHEQNSVPGMANKLLSRLATRVYTAFPNVLPDAQWVGNPMRRAFTRQPRPERRLAGREGPLRLLVVGGSLGAKALNDIVPQALAWIHEQDRPIVTHQSGESQIEALRRSYAAAGVEATLTPFIEDTAAAFAEADLVLCRAGASTVTEIAAVGAAAVFVPFPHAVDDHQTTNAQYLVKVGGGWLVQQADLTAHGLAEMLQNMKRQDLLAKAQKARTMRKINATRDIVAACERLAR.

Residues 1 to 31 (MTSRFGHSQHPRRGRSARARAGRREGVQSNF) are disordered. Over residues 7-21 (HSQHPRRGRSARARA) the composition is skewed to basic residues. UDP-N-acetyl-alpha-D-glucosamine-binding positions include 58–60 (TGG), Asn170, Arg206, Ser234, Ile288, and Gln333.

This sequence belongs to the glycosyltransferase 28 family. MurG subfamily.

The protein localises to the cell inner membrane. It carries out the reaction di-trans,octa-cis-undecaprenyl diphospho-N-acetyl-alpha-D-muramoyl-L-alanyl-D-glutamyl-meso-2,6-diaminopimeloyl-D-alanyl-D-alanine + UDP-N-acetyl-alpha-D-glucosamine = di-trans,octa-cis-undecaprenyl diphospho-[N-acetyl-alpha-D-glucosaminyl-(1-&gt;4)]-N-acetyl-alpha-D-muramoyl-L-alanyl-D-glutamyl-meso-2,6-diaminopimeloyl-D-alanyl-D-alanine + UDP + H(+). The protein operates within cell wall biogenesis; peptidoglycan biosynthesis. Functionally, cell wall formation. Catalyzes the transfer of a GlcNAc subunit on undecaprenyl-pyrophosphoryl-MurNAc-pentapeptide (lipid intermediate I) to form undecaprenyl-pyrophosphoryl-MurNAc-(pentapeptide)GlcNAc (lipid intermediate II). In Acidovorax sp. (strain JS42), this protein is UDP-N-acetylglucosamine--N-acetylmuramyl-(pentapeptide) pyrophosphoryl-undecaprenol N-acetylglucosamine transferase.